Reading from the N-terminus, the 114-residue chain is Large ribosomal subunit protein bL19 (114 aa).

It belongs to the bacterial ribosomal protein bL19 family.

In terms of biological role, this protein is located at the 30S-50S ribosomal subunit interface and may play a role in the structure and function of the aminoacyl-tRNA binding site. In Lactococcus lactis subsp. lactis (strain IL1403) (Streptococcus lactis), this protein is Large ribosomal subunit protein bL19.